The primary structure comprises 392 residues: Succinate--CoA ligase [ADP-forming] subunit beta (392 aa).

The ATP-grasp domain maps to 9-236 (KELFAAHGVP…PSAADPLEAK (228 aa)). ATP-binding positions include Lys-45, 52 to 54 (GRG), Val-94, and Glu-99. 2 residues coordinate Mg(2+): Asn-191 and Asp-205. Substrate contacts are provided by residues Asn-256 and 318–320 (GIT).

This sequence belongs to the succinate/malate CoA ligase beta subunit family. In terms of assembly, heterotetramer of two alpha and two beta subunits. It depends on Mg(2+) as a cofactor.

The catalysed reaction is succinate + ATP + CoA = succinyl-CoA + ADP + phosphate. It carries out the reaction GTP + succinate + CoA = succinyl-CoA + GDP + phosphate. Its pathway is carbohydrate metabolism; tricarboxylic acid cycle; succinate from succinyl-CoA (ligase route): step 1/1. In terms of biological role, succinyl-CoA synthetase functions in the citric acid cycle (TCA), coupling the hydrolysis of succinyl-CoA to the synthesis of either ATP or GTP and thus represents the only step of substrate-level phosphorylation in the TCA. The beta subunit provides nucleotide specificity of the enzyme and binds the substrate succinate, while the binding sites for coenzyme A and phosphate are found in the alpha subunit. The protein is Succinate--CoA ligase [ADP-forming] subunit beta of Acidothermus cellulolyticus (strain ATCC 43068 / DSM 8971 / 11B).